A 91-amino-acid chain; its full sequence is Ice-structuring protein 2A7 (91 aa).

Positions 1-21 (MALSLFTVGQLIFLFWTMRIT) are cleaved as a signal peptide. Residues 22-39 (EANPDPAAKAVPAAAAPD) constitute a propeptide, removed by a dipeptidylpeptidase.

Belongs to the type-I AFP family. Detected in blood serum (at protein level).

The protein resides in the secreted. Its function is as follows. Contributes to protect fish blood from freezing at subzero sea water temperatures. Lowers the blood freezing point. Binds to nascent ice crystals and prevents further growth. This is Ice-structuring protein 2A7 from Pseudopleuronectes americanus (Winter flounder).